A 777-amino-acid polypeptide reads, in one-letter code: Ribosome biogenesis protein ERB1 (777 aa).

The interval methionine 1–alanine 122 is disordered. Acidic residues predominate over residues serine 36–histidine 67. WD repeat units follow at residues glycine 430–alanine 469, serine 473–glutamate 513, threonine 562–proline 604, arginine 606–valine 645, proline 648–lysine 687, phenylalanine 691–glutamate 731, and valine 747–methionine 777.

The protein belongs to the WD repeat BOP1/ERB1 family. In terms of assembly, component of the NOP7 complex, composed of ERB1, NOP7 and YTM1. The complex is held together by ERB1, which interacts with NOP7 via its N-terminal domain and with YTM1 via a high-affinity interaction between the seven-bladed beta-propeller domains of the 2 proteins. The NOP7 complex associates with the 66S pre-ribosome.

The protein resides in the nucleus. It localises to the nucleolus. It is found in the nucleoplasm. Its function is as follows. Component of the NOP7 complex, which is required for maturation of the 25S and 5.8S ribosomal RNAs and formation of the 60S ribosome. The protein is Ribosome biogenesis protein ERB1 of Pyricularia oryzae (strain 70-15 / ATCC MYA-4617 / FGSC 8958) (Rice blast fungus).